Reading from the N-terminus, the 205-residue chain is Glycerol-3-phosphate acyltransferase (205 aa).

Helical transmembrane passes span L13–L33, L68–Y88, A90–F110, I120–A140, and Y147–G167.

Belongs to the PlsY family. In terms of assembly, probably interacts with PlsX.

It is found in the cell inner membrane. It catalyses the reaction an acyl phosphate + sn-glycerol 3-phosphate = a 1-acyl-sn-glycero-3-phosphate + phosphate. It participates in lipid metabolism; phospholipid metabolism. Catalyzes the transfer of an acyl group from acyl-phosphate (acyl-PO(4)) to glycerol-3-phosphate (G3P) to form lysophosphatidic acid (LPA). This enzyme utilizes acyl-phosphate as fatty acyl donor, but not acyl-CoA or acyl-ACP. The protein is Glycerol-3-phosphate acyltransferase of Agrobacterium fabrum (strain C58 / ATCC 33970) (Agrobacterium tumefaciens (strain C58)).